A 379-amino-acid chain; its full sequence is Cytochrome b (379 aa).

4 helical membrane passes run 34 to 54 (FGSL…LLAM), 78 to 99 (WLIR…YLHI), 114 to 134 (WNTG…GYVL), and 179 to 199 (FFAL…IHLT). Positions 84 and 98 each coordinate heme b. Heme b-binding residues include H183 and H197. H202 contacts a ubiquinone. The next 4 membrane-spanning stretches (helical) occupy residues 227–247 (LKDI…AFFS), 289–309 (LGGV…PFLH), 321–341 (LSQM…WIGS), and 348–368 (FIII…ILFP).

This sequence belongs to the cytochrome b family. As to quaternary structure, the cytochrome bc1 complex contains 11 subunits: 3 respiratory subunits (MT-CYB, CYC1 and UQCRFS1), 2 core proteins (UQCRC1 and UQCRC2) and 6 low-molecular weight proteins (UQCRH/QCR6, UQCRB/QCR7, UQCRQ/QCR8, UQCR10/QCR9, UQCR11/QCR10 and a cleavage product of UQCRFS1). This cytochrome bc1 complex then forms a dimer. Requires heme b as cofactor.

It localises to the mitochondrion inner membrane. Component of the ubiquinol-cytochrome c reductase complex (complex III or cytochrome b-c1 complex) that is part of the mitochondrial respiratory chain. The b-c1 complex mediates electron transfer from ubiquinol to cytochrome c. Contributes to the generation of a proton gradient across the mitochondrial membrane that is then used for ATP synthesis. The chain is Cytochrome b (MT-CYB) from Dromaius novaehollandiae (Emu).